Consider the following 245-residue polypeptide: MQHEPEDQTFQLQALEICEPDSSFDPQKPPESGEEYLMHMFYERKRCPAVVTKRSSKIRNNTGNTTLEMLDNPELPPFKCLLPTPEWRDEQVKSFQAARSQVLVLRKELANNNYDQSGEPPLTSDQEKWKEFCRNQQPLLSTLLHLTQNDLELLLEMLSKWLQDPNTTVDLLHDVWLARWLYATLVCLHLPLEPHVFSTLRYIARTCIHLRNQLKEDEVQRAAPYNLLLTLTVQVFAQNDFKDYI.

Belongs to the gemin-2 family. As to quaternary structure, component of the core survival motor neuron (SMN) complex composed of Smn, Gem2, Gem3, rig/Gem5 and one of 3 almost identical Gem4 paralogs encoded by Glos/Gem4a, Gem4b or Gem4c. Part of a minimal SMN complex composed of Smn and Gem2 only; this complex is active in UsnRNP assembly. The SMN complex associates with the entire set of spliceosomal snRNP Sm proteins, SmB, SmD1, SmD2, SmD3, SmE, SmF and SmG, and with the snRNP-specific proteins snRNP-U1-70K, U2A, snf/U1A and U5-116KD. Expressed in nurse cells and oocytes.

It localises to the cytoplasm. The protein localises to the U-body. Component of the survival motor neuron (SMN) complex that catalyzes the assembly of small nuclear ribonucleoproteins (snRNPs), the building blocks of the spliceosome, and thereby plays an important role in the splicing of cellular pre-mRNAs. Most spliceosomal snRNPs contain a common set of Sm proteins SNRPB, SNRPD1, SNRPD2, SNRPD3, SNRPE, SNRPF and SNRPG that assemble in a heptameric protein ring on the Sm site of the small nuclear RNA to form the core snRNP (Sm core). In the cytosol, the Sm proteins SNRPD1, SNRPD2, SNRPE, SNRPF and SNRPG (5Sm) are trapped in an inactive 6S pICln-Sm complex by the chaperone CLNS1A that controls the assembly of the core snRNP. To assemble core snRNPs, the SMN complex accepts the trapped 5Sm proteins from CLNS1A. Binding of snRNA inside 5Sm ultimately triggers eviction of the SMN complex, thereby allowing binding of SNRPD3 and SNRPB to complete assembly of the core snRNP. Within the SMN complex, GEMIN2 constrains the conformation of 5Sm, thereby promoting 5Sm binding to snRNA containing the snRNP code (a nonameric Sm site and a 3'-adjacent stem-loop), thus preventing progression of assembly until a cognate substrate is bound. Involved in adult motor function. The sequence is that of Gem-associated protein 2 from Drosophila melanogaster (Fruit fly).